A 367-amino-acid chain; its full sequence is Alanine racemase (367 aa).

The Proton acceptor; specific for D-alanine role is filled by K34. At K34 the chain carries N6-(pyridoxal phosphate)lysine. R129 contacts substrate. Y251 acts as the Proton acceptor; specific for L-alanine in catalysis. Residue M299 participates in substrate binding.

Belongs to the alanine racemase family. Pyridoxal 5'-phosphate is required as a cofactor.

It carries out the reaction L-alanine = D-alanine. It functions in the pathway amino-acid biosynthesis; D-alanine biosynthesis; D-alanine from L-alanine: step 1/1. Catalyzes the interconversion of L-alanine and D-alanine. May also act on other amino acids. The polypeptide is Alanine racemase (alr) (Thiobacillus denitrificans (strain ATCC 25259 / T1)).